We begin with the raw amino-acid sequence, 471 residues long: Alpha-amylase (471 aa).

The residue at position 1 (Gln-1) is a Pyrrolidone carboxylic acid. The cysteines at positions 28 and 84 are disulfide-linked. Positions 98, 146, and 155 each coordinate Ca(2+). Cys-134 and Cys-148 are oxidised to a cystine. Arg-183 serves as a coordination point for chloride. Asp-185 functions as the Nucleophile in the catalytic mechanism. Position 189 (His-189) interacts with Ca(2+). Glu-222 (proton donor) is an active-site residue. Residues Asn-285 and Arg-321 each coordinate chloride. Residues 326 to 343 (FDFTDNDQGPPQDGSGNL) are compositionally biased toward polar residues. Residues 326–346 (FDFTDNDQGPPQDGSGNLISP) form a disordered region. 2 disulfide bridges follow: Cys-354–Cys-360 and Cys-425–Cys-437.

It belongs to the glycosyl hydrolase 13 family. As to quaternary structure, monomer. Ca(2+) serves as cofactor. Chloride is required as a cofactor.

The catalysed reaction is Endohydrolysis of (1-&gt;4)-alpha-D-glucosidic linkages in polysaccharides containing three or more (1-&gt;4)-alpha-linked D-glucose units.. This Tenebrio molitor (Yellow mealworm beetle) protein is Alpha-amylase.